The chain runs to 492 residues: MGSSSATANRFLLSKIATSEGHGENSPYFDGWKAYDRNPFHPTKNPEGVIQMGLAENQLSFDSIEDWIKKNPKASICTPEGVEEFKNVAIFQDYHGFPEFRKAVAMFMSKARGGRVTFDPNRVVMSGGATGANELVMFCLADPGDAFLVPSPYYPAFFRDLGWRTGVQIVPVDCDSSNNFKITKEALEAAYEKAQKNNINVKGLIITNPSNPLGTTLDRNTLESLVEFINQKNIHLVCDEIYAATVFSSPTFTCISEVIQNMNCNPNLIHIVYSLSKDMGLPGLRVGIVYSYNDDVVNIGRKMSSFGLVSSQTQHMLPSMLLDEEFVARFLETSPKRLAKRHGVFTKGLEEVGINCLKSNAGLFCWMDLRRLLEDQTFDGEMVLWRVIVNEVGPNVSPGSSFKCVEPGWFRVCFANMDDETLEVALKRIRTFVRQGKKAQDQVVQVKSPKRWKSNLRLSFSSSSTRRFDQESVNVLSPHMMSPHSPLVRAKT.

At K277 the chain carries N6-(pyridoxal phosphate)lysine.

The protein belongs to the class-I pyridoxal-phosphate-dependent aminotransferase family. Homodimer. Requires pyridoxal 5'-phosphate as cofactor.

It catalyses the reaction S-adenosyl-L-methionine = 1-aminocyclopropane-1-carboxylate + S-methyl-5'-thioadenosine + H(+). It functions in the pathway alkene biosynthesis; ethylene biosynthesis via S-adenosyl-L-methionine; ethylene from S-adenosyl-L-methionine: step 1/2. Its function is as follows. Catalyzes the formation of 1-aminocyclopropane-1-carboxylate, a direct precursor of ethylene in higher plants. This chain is 1-aminocyclopropane-1-carboxylate synthase 1 (ACS1), found in Prunus mume (Japanese apricot).